Reading from the N-terminus, the 639-residue chain is Probable endo-1,3(4)-beta-glucanase ACLA_073210 (639 aa).

Residues 1 to 21 (MAPSSLLLSVGSLIASSLASA) form the signal peptide. Residues 26–290 (IREQSQSYQL…WAGNVFGESG (265 aa)) form the GH16 domain. Asn65 carries an N-linked (GlcNAc...) asparagine glycan. Glu146 functions as the Nucleophile in the catalytic mechanism. Glu151 serves as the catalytic Proton donor. 2 disordered regions span residues 337–384 (TVAS…TVAE) and 442–545 (QSSS…GSSI). Over residues 339–348 (ASPNTASEVH) the composition is skewed to polar residues. Composition is skewed to low complexity over residues 362–376 (PTVP…VPPA) and 478–488 (TTTEAVAETET). Ala617 carries GPI-anchor amidated alanine lipidation. A propeptide spans 618–639 (GARKLSVGLSGLVGALAVAALA) (removed in mature form).

It belongs to the glycosyl hydrolase 16 family.

The protein localises to the cell membrane. The catalysed reaction is Endohydrolysis of (1-&gt;3)- or (1-&gt;4)-linkages in beta-D-glucans when the glucose residue whose reducing group is involved in the linkage to be hydrolyzed is itself substituted at C-3.. Its function is as follows. Mixed-linked glucanase involved in the degradation of complex natural cellulosic substrates. The chain is Probable endo-1,3(4)-beta-glucanase ACLA_073210 from Aspergillus clavatus (strain ATCC 1007 / CBS 513.65 / DSM 816 / NCTC 3887 / NRRL 1 / QM 1276 / 107).